The sequence spans 405 residues: Divinyl chlorophyllide a 8-vinyl-reductase, chloroplastic (405 aa).

The transit peptide at Met-1–Ala-58 directs the protein to the chloroplast.

It is found in the plastid. The protein localises to the chloroplast. The enzyme catalyses protochlorophyllide a + NADP(+) = 3,8-divinyl protochlorophyllide a + NADPH + H(+). The protein operates within porphyrin-containing compound metabolism; chlorophyll biosynthesis. Catalyzes the conversion of divinyl chlorophyllide to monovinyl chlorophyllide. Reduces the 8-vinyl group of the tetrapyrrole to an ethyl group using NADPH as the reductant. Can use (3,8-divinyl)-chlorophyllide a (DV-Chlidea) &gt; (3,8-divinyl)-chlorophyll a (DV-Chla) &gt; (3,8-divinyl)-protochlorophyllide a (DV-Pchlidea) &gt; (3,8-divinyl)-magnesium-protoporphyrin IX monomethyl ester (DV-MPE) &gt; (3,8-divinyl)-magnesium-protoporphyrin IX (DV-Mg-Proto) as substrates. The protein is Divinyl chlorophyllide a 8-vinyl-reductase, chloroplastic (DVR) of Oryza sativa subsp. indica (Rice).